Here is a 70-residue protein sequence, read N- to C-terminus: ATP synthase subunit c (70 aa).

Transmembrane regions (helical) follow at residues 4 to 24 (IAAG…DGIV) and 47 to 67 (FIGV…ALMV).

This sequence belongs to the ATPase C chain family. In terms of assembly, F-type ATPases have 2 components, F(1) - the catalytic core - and F(0) - the membrane proton channel. F(1) has five subunits: alpha(3), beta(3), gamma(1), delta(1), epsilon(1). F(0) has three main subunits: a(1), b(2) and c(10-14). The alpha and beta chains form an alternating ring which encloses part of the gamma chain. F(1) is attached to F(0) by a central stalk formed by the gamma and epsilon chains, while a peripheral stalk is formed by the delta and b chains.

It localises to the cell membrane. Its function is as follows. F(1)F(0) ATP synthase produces ATP from ADP in the presence of a proton or sodium gradient. F-type ATPases consist of two structural domains, F(1) containing the extramembraneous catalytic core and F(0) containing the membrane proton channel, linked together by a central stalk and a peripheral stalk. During catalysis, ATP synthesis in the catalytic domain of F(1) is coupled via a rotary mechanism of the central stalk subunits to proton translocation. Functionally, key component of the F(0) channel; it plays a direct role in translocation across the membrane. A homomeric c-ring of between 10-14 subunits forms the central stalk rotor element with the F(1) delta and epsilon subunits. This is ATP synthase subunit c from Levilactobacillus brevis (strain ATCC 367 / BCRC 12310 / CIP 105137 / JCM 1170 / LMG 11437 / NCIMB 947 / NCTC 947) (Lactobacillus brevis).